Here is a 547-residue protein sequence, read N- to C-terminus: Chaperonin GroEL (547 aa).

Residues threonine 30–proline 33, lysine 51, aspartate 87–threonine 91, glycine 415, asparagine 479–alanine 481, and aspartate 495 contribute to the ATP site.

This sequence belongs to the chaperonin (HSP60) family. As to quaternary structure, forms a cylinder of 14 subunits composed of two heptameric rings stacked back-to-back. Interacts with the co-chaperonin GroES.

Its subcellular location is the cytoplasm. It catalyses the reaction ATP + H2O + a folded polypeptide = ADP + phosphate + an unfolded polypeptide.. In terms of biological role, together with its co-chaperonin GroES, plays an essential role in assisting protein folding. The GroEL-GroES system forms a nano-cage that allows encapsulation of the non-native substrate proteins and provides a physical environment optimized to promote and accelerate protein folding. The sequence is that of Chaperonin GroEL from Acinetobacter baumannii (strain ACICU).